The following is a 592-amino-acid chain: Methylenetetrahydrofolate reductase (NADH) 1 (592 aa).

Glutamate 21 serves as the catalytic Proton donor/acceptor. NAD(+) contacts are provided by residues 21–26 and 52–53; these read EFFPPK and TW. FAD contacts are provided by residues 52–53, histidine 81, 111–113, tyrosine 153, 157–160, aspartate 175, and lysine 182; these read TW, RGD, and HPDV. Position 113 (aspartate 113) interacts with substrate. The substrate site is built by glutamine 193 and tyrosine 285.

The protein belongs to the methylenetetrahydrofolate reductase family. In terms of assembly, homodimer. Requires FAD as cofactor.

The enzyme catalyses (6S)-5-methyl-5,6,7,8-tetrahydrofolate + NAD(+) = (6R)-5,10-methylene-5,6,7,8-tetrahydrofolate + NADH + H(+). It participates in one-carbon metabolism; tetrahydrofolate interconversion. Plant MTHFRs strongly prefer NADH over NADPH. Not inhibited by methionine or S-adenosylmethionine. The probable reversibility of the MTHFR reaction in plants suggests that they can metabolize the methyl group of 5,10-methylenetetrahydrofolate to serine, sugars and starch. This is Methylenetetrahydrofolate reductase (NADH) 1 (MTHFR1) from Arabidopsis thaliana (Mouse-ear cress).